We begin with the raw amino-acid sequence, 320 residues long: Protoheme IX farnesyltransferase (320 aa).

A disordered region spans residues 1–24; it reads MSMITERPVSDPAGQSVSATGDGA. Helical transmembrane passes span 33-55, 68-88, 117-137, 140-160, 183-203, 241-261, 262-282, and 300-320; these read AVVAAYVALTKPRIVELLLVTTV, LWLMAVVLVGGSLAAGAASVL, NALIFGLVLATVSVTLLAVFT, LAAGLTLAAILYYDLVYTAWL, WAAVTGSLAPAAWALFGVVFF, ILVFAWLTVLVSLVTWPLGAG, MGPIYGLPTLVVGVIFLVEAH, and FHWSTTYLTVVFAAVALDALI.

It belongs to the UbiA prenyltransferase family. Protoheme IX farnesyltransferase subfamily.

It localises to the cell membrane. The enzyme catalyses heme b + (2E,6E)-farnesyl diphosphate + H2O = Fe(II)-heme o + diphosphate. The protein operates within porphyrin-containing compound metabolism; heme O biosynthesis; heme O from protoheme: step 1/1. Converts heme B (protoheme IX) to heme O by substitution of the vinyl group on carbon 2 of heme B porphyrin ring with a hydroxyethyl farnesyl side group. The protein is Protoheme IX farnesyltransferase of Salinispora tropica (strain ATCC BAA-916 / DSM 44818 / JCM 13857 / NBRC 105044 / CNB-440).